A 553-amino-acid polypeptide reads, in one-letter code: Aminotransferase FUM8 (553 aa).

The first 25 residues, 1-25 (MSPAPAILALRRVYNFCLLVDEAHG), serve as a signal peptide directing secretion. N-linked (GlcNAc...) asparagine glycosylation occurs at N480.

Belongs to the class-II pyridoxal-phosphate-dependent aminotransferase family. BioF subfamily. Requires pyridoxal 5'-phosphate as cofactor.

The protein resides in the endoplasmic reticulum. It participates in mycotoxin biosynthesis. Its function is as follows. Aminotransferase; part of the gene cluster that mediates the biosynthesis of fumonisins B1 (FB1), B2 (FB2), B3 (FB3), and B4 (FB4), which are carcinogenic mycotoxins. Within the pathway, FUM8 catalyzes the release of the C-18 polyketide chain from the highly reducing polyketide synthase FUM1 by a nucleophilic attack of a carbanion, which is derived from R-carbon of alanine by decarboxylation, on the carbonyl carbon of polyketide acyl chain. The biosynthesis starts with the FUM1-catalyzed carbon chain assembly from one molecule of acetyl-CoA, eight molecules of malonyl-CoA, and two molecules of methionine (in S-adenosyl form). The C18 polyketide chain is released from the enzyme by a nucleophilic attack of a carbanion, which is derived from R-carbon of alanine by decarboxylation, on the carbonyl carbon of polyketide acyl chain. This step is catalyzed by the pyridoxal 5'-phosphate-dependent aminoacyl transferase FUM8. The resultant 3-keto intermediate is then stereospecifically reduced to a 3-hydroxyl product by reductase FUM13. Subsequent oxidations at C-10 by the cytochrome P450 monooxygenase FUM2, C-14 and C-15 by FUM6, FUM12 or FUM15, tricarballylic esterification of the hydroxyl groups on C-14 and C-15 by acyltransferase FUM14, and C-5 hydroxylation by 2-keto-glutarate-dependent dioxygenase FUM3 furnish the biosynthesis of fumonisins. The tricarballylic moieties are most likely derived from the citric acid cycle, and their addition to the carbon backbone may involve FUM7, FUM10, FUM11 and FUM14. The polypeptide is Aminotransferase FUM8 (Gibberella moniliformis (strain M3125 / FGSC 7600) (Maize ear and stalk rot fungus)).